We begin with the raw amino-acid sequence, 354 residues long: UDP-N-acetylglucosamine--N-acetylmuramyl-(pentapeptide) pyrophosphoryl-undecaprenol N-acetylglucosamine transferase (354 aa).

Residues 11 to 13 (TAG), Arg164, Ser194, and Gln289 contribute to the UDP-N-acetyl-alpha-D-glucosamine site.

Belongs to the glycosyltransferase 28 family. MurG subfamily.

It localises to the cell membrane. It carries out the reaction di-trans,octa-cis-undecaprenyl diphospho-N-acetyl-alpha-D-muramoyl-L-alanyl-D-glutamyl-meso-2,6-diaminopimeloyl-D-alanyl-D-alanine + UDP-N-acetyl-alpha-D-glucosamine = di-trans,octa-cis-undecaprenyl diphospho-[N-acetyl-alpha-D-glucosaminyl-(1-&gt;4)]-N-acetyl-alpha-D-muramoyl-L-alanyl-D-glutamyl-meso-2,6-diaminopimeloyl-D-alanyl-D-alanine + UDP + H(+). It participates in cell wall biogenesis; peptidoglycan biosynthesis. In terms of biological role, cell wall formation. Catalyzes the transfer of a GlcNAc subunit on undecaprenyl-pyrophosphoryl-MurNAc-pentapeptide (lipid intermediate I) to form undecaprenyl-pyrophosphoryl-MurNAc-(pentapeptide)GlcNAc (lipid intermediate II). This is UDP-N-acetylglucosamine--N-acetylmuramyl-(pentapeptide) pyrophosphoryl-undecaprenol N-acetylglucosamine transferase from Clostridium botulinum (strain ATCC 19397 / Type A).